Here is a 265-residue protein sequence, read N- to C-terminus: NAD kinase 1 (265 aa).

D45 serves as the catalytic Proton acceptor. NAD(+) contacts are provided by residues 45-46 (DG), 122-123 (NE), R148, D150, and A185.

The protein belongs to the NAD kinase family. A divalent metal cation is required as a cofactor.

The protein localises to the cytoplasm. It carries out the reaction NAD(+) + ATP = ADP + NADP(+) + H(+). In terms of biological role, involved in the regulation of the intracellular balance of NAD and NADP, and is a key enzyme in the biosynthesis of NADP. Catalyzes specifically the phosphorylation on 2'-hydroxyl of the adenosine moiety of NAD to yield NADP. The chain is NAD kinase 1 from Bacillus cereus (strain ATCC 10987 / NRS 248).